A 203-amino-acid chain; its full sequence is MKPIKIGVGGPVGAGKTMLVEKLTRYMSDDYSMAVVTNDIYTKEDAKFLMENGVLPSDRIIGVETGGCPHTAIREDASMNFAAVNELVQRHPDVQIVFVESGGDNLAATFSPELADFSIYIIDVAQGEKIPRKGGQGMIKSDLFVINKTDLAPYVGANLDIMASDTRKFRGNKPFVFTNLKKDEGLPDVISWIRKNVCLEGLT.

Position 10–17 (10–17) interacts with GTP; sequence GPVGAGKT.

It belongs to the SIMIBI class G3E GTPase family. UreG subfamily. In terms of assembly, homodimer. UreD, UreF and UreG form a complex that acts as a GTP-hydrolysis-dependent molecular chaperone, activating the urease apoprotein by helping to assemble the nickel containing metallocenter of UreC. The UreE protein probably delivers the nickel.

The protein localises to the cytoplasm. Its function is as follows. Facilitates the functional incorporation of the urease nickel metallocenter. This process requires GTP hydrolysis, probably effectuated by UreG. This Lachnoclostridium phytofermentans (strain ATCC 700394 / DSM 18823 / ISDg) (Clostridium phytofermentans) protein is Urease accessory protein UreG.